A 346-amino-acid chain; its full sequence is Uroporphyrinogen decarboxylase (346 aa).

Substrate-binding positions include 21-25, Asp71, Tyr146, Ser201, and His316; that span reads RQAGR.

Belongs to the uroporphyrinogen decarboxylase family. In terms of assembly, homodimer.

Its subcellular location is the cytoplasm. The catalysed reaction is uroporphyrinogen III + 4 H(+) = coproporphyrinogen III + 4 CO2. It participates in porphyrin-containing compound metabolism; protoporphyrin-IX biosynthesis; coproporphyrinogen-III from 5-aminolevulinate: step 4/4. Its function is as follows. Catalyzes the decarboxylation of four acetate groups of uroporphyrinogen-III to yield coproporphyrinogen-III. This chain is Uroporphyrinogen decarboxylase, found in Rickettsia massiliae (strain Mtu5).